A 126-amino-acid polypeptide reads, in one-letter code: Profilin (126 aa).

It belongs to the profilin family. As to quaternary structure, occurs in many kinds of cells as a complex with monomeric actin in a 1:1 ratio.

The protein resides in the cytoplasm. It localises to the cytoskeleton. In terms of biological role, binds to actin and affects the structure of the cytoskeleton. At high concentrations, profilin prevents the polymerization of actin, whereas it enhances it at low concentrations. By binding to PIP2, it inhibits the formation of IP3 and DG. This Saccharomyces cerevisiae (strain ATCC 204508 / S288c) (Baker's yeast) protein is Profilin (PFY1).